The following is a 465-amino-acid chain: Mothers against decapentaplegic homolog 1 (465 aa).

At Met1 the chain carries N-acetylmethionine. The MH1 domain maps to 12 to 136 (PAVKRLLGWK…YKRVESPVLP (125 aa)). Cys64, Cys109, Cys121, and His126 together coordinate Zn(2+). Residues 162-249 (NEPHMPLNAT…QPMDTNMMAP (88 aa)) are disordered. Positions 179–210 (PNSHPFPHSPNSSYPNSPGSSSSTYPHSPTSS) are enriched in low complexity. The span at 221–232 (DTPPPAYLPPED) shows a compositional bias: pro residues. Residues 271–465 (WCSIVYYELN…SPHNPISSVS (195 aa)) enclose the MH2 domain. Residue Thr322 is modified to Phosphothreonine; by MINK1, TNIK and MAP4K4. The interval 418-428 (KGWGAEYHRQD) is L3 loop. Ser463 and Ser465 each carry phosphoserine.

Belongs to the dwarfin/SMAD family. As to quaternary structure, found in a complex with SMAD4 and YY1. Interacts with HGS, NANOG and ZCCHC12. Upon C-terminus phosphorylation: forms trimers with another SMAD1 and the co-SMAD SMAD4. Interacts with PEBP2-alpha subunit, CREB-binding protein (CBP), p300, SMURF1, SMURF2, USP15 and HOXC8. Associates with ZNF423 or ZNF521 in response to BMP2 leading to activate transcription of BMP target genes. Interacts with SKOR1. Interacts (via MH2 domain) with LEMD3. Binding to LEMD3 results in at least a partial reduction of receptor-mediated phosphorylation. Forms a ternary complex with PSMB4 and OAZ1 before PSMB4 is incorporated into the 20S proteasome. Interacts (via MH2 domain) with FAM83G (via MH2 domain); in a SMAD4-independent manner. Interacts with ZC3H3. Interacts with TMEM119. Interacts (via MH1 and MH2 domains) with ZNF8. Interacts with RANBP3L; the interaction increases when SMAD1 is not phosphorylated and mediates SMAD1 nuclear export. Interacts with EGR1; this interaction inhibits SMAD1 dephosphorylation. Interacts with SMAD6. Interacts with YAP1. Interacts with MTMR4; negatively regulates BMP signaling through SMAD1 dephosphorylation and retention in endosomes. Post-translationally, phosphorylation of the C-terminal SVS motif by BMP type 1 receptor kinase activates SMAD1 by promoting dissociation from the receptor and trimerization with SMAD4. Phosphorylation by ERK2 MAP kinase in response to EGF or HGF prevents SMAD1 nuclear accumulation and transcriptional activity in response to BMP. Dephosphorylation, probably by PPM1A, induces its export from the nucleus to the cytoplasm. Dephosphorylation is inhibited by association with EGR1. Phosphorylation by CDK8/9 creates binding sites for YAP1, and subsequent phosphorylation by GSK3 switches off YAP1 binding and adds binding sites for SMURF1. Ubiquitinated by SMAD-specific E3 ubiquitin ligase SMURF1, leading to its degradation. Monoubiquitinated, leading to prevent DNA-binding. Deubiquitination by USP15 alleviates inhibition and promotes activation of TGF-beta target genes. Dephosphorylation, probably by PPM1A, induces its export from the nucleus to the cytoplasm. Phospho-SMAD1 is ubiquitinated by CHIP leading to disruption of the SMAD1-SMAD4 complex.

It is found in the cytoplasm. Its subcellular location is the nucleus. Its function is as follows. Transcriptional modulator that plays a role in various cellular processes, including embryonic development, cell differentiation, and tissue homeostasis. Upon BMP ligand binding to their receptors at the cell surface, is phosphorylated by activated type I BMP receptors (BMPRIs) and associates with SMAD4 to form an heteromeric complex which translocates into the nucleus acting as transcription factor. In turn, the hetero-trimeric complex recognizes cis-regulatory elements containing Smad Binding Elements (SBEs) to modulate the outcome of the signaling network. SMAD1/OAZ1/PSMB4 complex mediates the degradation of the CREBBP/EP300 repressor SNIP1. Positively regulates BMP4-induced expression of odontogenic development regulator MSX1 following IPO7-mediated nuclear import. The sequence is that of Mothers against decapentaplegic homolog 1 (SMAD1) from Bos taurus (Bovine).